We begin with the raw amino-acid sequence, 199 residues long: N-(5'-phosphoribosyl)anthranilate isomerase (199 aa).

This sequence belongs to the TrpF family.

The catalysed reaction is N-(5-phospho-beta-D-ribosyl)anthranilate = 1-(2-carboxyphenylamino)-1-deoxy-D-ribulose 5-phosphate. The protein operates within amino-acid biosynthesis; L-tryptophan biosynthesis; L-tryptophan from chorismate: step 3/5. The protein is N-(5'-phosphoribosyl)anthranilate isomerase of Streptococcus pneumoniae serotype 19F (strain G54).